Here is a 434-residue protein sequence, read N- to C-terminus: Mothers against decapentaplegic homolog 9 (434 aa).

An MH1 domain is found at 16–140; the sequence is PAVKRLLGWK…YRRVETPVLP (125 aa). Residues Cys-68, Cys-113, Cys-125, and His-130 each coordinate Zn(2+). Residues 171-222 form a disordered region; it reads MPHNATYPDSFQQSLGPAPPSSPGHVFPQSPCPTSYPQSPGSPSESDSPYQH. Over residues 202–221 the composition is skewed to polar residues; the sequence is CPTSYPQSPGSPSESDSPYQ. One can recognise an MH2 domain in the interval 236–434; it reads WCSVAYYELN…SPHNPISSVS (199 aa).

It belongs to the dwarfin/SMAD family. In terms of assembly, interaction with the co-SMAD SMAD4. Interacts with PEBP2-alpha subunit. Interacts with RANBP3L. Phosphorylated on serine by BMP (bone morphogenetic proteins) type 1 receptor kinase. Phosphorylated by activin type I receptor-like kinase-2 (ALK-2).

The protein localises to the cytoplasm. It localises to the nucleus. Transcriptional modulator activated by BMP (bone morphogenetic proteins) type 1 receptor kinase. SMAD9 is a receptor-regulated SMAD (R-SMAD). Has been shown to be activated by activin type I receptor-like kinase-2 (ALK-2) which stimulates heteromerization between SMAD9 and SMAD4. ALK-2 binds TGF-beta, activin and BMP. This Rattus norvegicus (Rat) protein is Mothers against decapentaplegic homolog 9 (Smad9).